We begin with the raw amino-acid sequence, 682 residues long: Potassium-transporting ATPase ATP-binding subunit (682 aa).

4 helical membrane passes run 34 to 54, 58 to 78, 219 to 239, and 254 to 274; these read PVMF…LAMV, IAGS…TVLF, IALT…TATL, and VLVA…LSAI. Residue aspartate 307 is the 4-aspartylphosphate intermediate of the active site. ATP-binding positions include aspartate 344, glutamate 348, 377 to 384, and lysine 395; that span reads FTAQSRMS. Residues aspartate 518 and aspartate 522 each coordinate Mg(2+). Helical transmembrane passes span 588–608, 616–636, and 662–682; these read FAII…LNVM, AILS…PLAL, and LLVP…LGLA.

It belongs to the cation transport ATPase (P-type) (TC 3.A.3) family. Type IA subfamily. In terms of assembly, the system is composed of three essential subunits: KdpA, KdpB and KdpC.

It is found in the cell inner membrane. It carries out the reaction K(+)(out) + ATP + H2O = K(+)(in) + ADP + phosphate + H(+). Functionally, part of the high-affinity ATP-driven potassium transport (or Kdp) system, which catalyzes the hydrolysis of ATP coupled with the electrogenic transport of potassium into the cytoplasm. This subunit is responsible for energy coupling to the transport system and for the release of the potassium ions to the cytoplasm. This is Potassium-transporting ATPase ATP-binding subunit from Salmonella dublin (strain CT_02021853).